A 159-amino-acid polypeptide reads, in one-letter code: Phosphopantetheine adenylyltransferase (159 aa).

A substrate-binding site is contributed by Thr10. Residues 10–11 (TF) and His18 each bind ATP. Lys42, Leu74, and Arg88 together coordinate substrate. ATP-binding positions include 89–91 (GLR), Glu99, and 124–130 (NSFISST).

The protein belongs to the bacterial CoaD family. As to quaternary structure, homohexamer. It depends on Mg(2+) as a cofactor.

The protein localises to the cytoplasm. The enzyme catalyses (R)-4'-phosphopantetheine + ATP + H(+) = 3'-dephospho-CoA + diphosphate. Its pathway is cofactor biosynthesis; coenzyme A biosynthesis; CoA from (R)-pantothenate: step 4/5. Its function is as follows. Reversibly transfers an adenylyl group from ATP to 4'-phosphopantetheine, yielding dephospho-CoA (dPCoA) and pyrophosphate. The protein is Phosphopantetheine adenylyltransferase of Shewanella halifaxensis (strain HAW-EB4).